Here is a 50-residue protein sequence, read N- to C-terminus: Large ribosomal subunit protein eL39 (50 aa).

It belongs to the eukaryotic ribosomal protein eL39 family. Part of the 50S ribosomal subunit. Interacts weakly with protein L23.

Binds to the 23S rRNA. Forms part of the polypeptide exit tunnel. The chain is Large ribosomal subunit protein eL39 (rpl39e) from Haloarcula marismortui (strain ATCC 43049 / DSM 3752 / JCM 8966 / VKM B-1809) (Halobacterium marismortui).